A 397-amino-acid polypeptide reads, in one-letter code: uncharacterized protein (397 aa).

This is an uncharacterized protein from Methanocaldococcus jannaschii (strain ATCC 43067 / DSM 2661 / JAL-1 / JCM 10045 / NBRC 100440) (Methanococcus jannaschii).